The sequence spans 106 residues: Ribonuclease P protein component 4 (106 aa).

C57, C60, C83, and C86 together coordinate Zn(2+).

This sequence belongs to the eukaryotic/archaeal RNase P protein component 4 family. Consists of a catalytic RNA component and at least 4-5 protein subunits. Requires Zn(2+) as cofactor.

The protein localises to the cytoplasm. It carries out the reaction Endonucleolytic cleavage of RNA, removing 5'-extranucleotides from tRNA precursor.. Its function is as follows. Part of ribonuclease P, a protein complex that generates mature tRNA molecules by cleaving their 5'-ends. This chain is Ribonuclease P protein component 4, found in Saccharolobus solfataricus (strain ATCC 35092 / DSM 1617 / JCM 11322 / P2) (Sulfolobus solfataricus).